The primary structure comprises 777 residues: Rho guanine nucleotide exchange factor 38 (777 aa).

Thr-34 carries the phosphothreonine modification. The interval 35-72 (DTVVESSVSGDHSGTLRRSQSDRTEYNQKLQEKMTPQG) is disordered. Over residues 37–52 (VVESSVSGDHSGTLRR) the composition is skewed to polar residues. Residues 53–66 (SQSDRTEYNQKLQE) show a composition bias toward basic and acidic residues. Residues 94–285 (KREKIIKELI…KDINVNINEL (192 aa)) enclose the DH domain. In terms of domain architecture, BAR spans 327-536 (LKILTRGESQ…QNQVLEEIQN (210 aa)). The SH3 1 domain maps to 582–645 (SAEELYQAKR…YSSFLKPYNP (64 aa)). The disordered stretch occupies residues 673 to 694 (PASDSVTGTSESSIGDSSSSLS). Low complexity predominate over residues 679-694 (TGTSESSIGDSSSSLS). The region spanning 713 to 776 (VDEQIFYAVH…PANYLGKMTY (64 aa)) is the SH3 2 domain.

Functionally, may act as a guanine-nucleotide releasing factor. The sequence is that of Rho guanine nucleotide exchange factor 38 (ARHGEF38) from Homo sapiens (Human).